A 490-amino-acid chain; its full sequence is Betaine aldehyde dehydrogenase (490 aa).

Asp93 lines the K(+) pocket. 150 to 152 (GAW) lines the NAD(+) pocket. Lys162 acts as the Charge relay system in catalysis. Residue 176–179 (KPSE) participates in NAD(+) binding. Residue Val180 coordinates K(+). 230–233 (GIAS) serves as a coordination point for NAD(+). Leu246 serves as a coordination point for K(+). Glu252 acts as the Proton acceptor in catalysis. The NAD(+) site is built by Gly254, Cys286, and Glu387. Residue Cys286 is the Nucleophile of the active site. Cys286 carries the post-translational modification Cysteine sulfenic acid (-SOH). The K(+) site is built by Lys457 and Gly460. Glu464 (charge relay system) is an active-site residue.

It belongs to the aldehyde dehydrogenase family. As to quaternary structure, dimer of dimers. K(+) serves as cofactor.

It catalyses the reaction betaine aldehyde + NAD(+) + H2O = glycine betaine + NADH + 2 H(+). It functions in the pathway amine and polyamine biosynthesis; betaine biosynthesis via choline pathway; betaine from betaine aldehyde: step 1/1. Involved in the biosynthesis of the osmoprotectant glycine betaine. Catalyzes the irreversible oxidation of betaine aldehyde to the corresponding acid. The protein is Betaine aldehyde dehydrogenase of Yersinia pseudotuberculosis serotype O:1b (strain IP 31758).